Reading from the N-terminus, the 321-residue chain is uncharacterized protein (321 aa).

The Proton donor role is filled by Tyr60. His118 is a substrate binding site.

This sequence belongs to the aldo/keto reductase family.

This is an uncharacterized protein from Schizosaccharomyces pombe (strain 972 / ATCC 24843) (Fission yeast).